The chain runs to 285 residues: HTH-type transcriptional regulator MurR (285 aa).

Residues 1-77 form the HTH rpiR-type domain; it reads MLYLTKIRNA…MALIGEYSAS (77 aa). Residues 37–56 constitute a DNA-binding region (H-T-H motif); that stretch reads SRQMAKQLGISQSSIVKFAQ. One can recognise an SIS domain in the interval 128-268; it reads IIEVISKAPF…FVGLVQLNDV (141 aa).

In terms of assembly, homotetramer.

It participates in amino-sugar metabolism; N-acetylmuramate degradation [regulation]. Its function is as follows. Represses the expression of the murPQ operon involved in the uptake and degradation of N-acetylmuramic acid (MurNAc). Binds to two adjacent inverted repeats within the operator region. MurNAc 6-phosphate, the substrate of MurQ, is the specific inducer that weakens binding of MurR to the operator. The chain is HTH-type transcriptional regulator MurR from Escherichia coli (strain ATCC 8739 / DSM 1576 / NBRC 3972 / NCIMB 8545 / WDCM 00012 / Crooks).